The primary structure comprises 336 residues: MSEYITLSLDEVCALSYQVLTRHGLSDAHARAIAEVITQGQRDECHSHGVYRLLGCVRSVREGRIDPRAEPSLRHVSPGVLEVDAHYGYSLLGFHTGLPILAEKARSQGIAAMVIKRCFHFSALWPEVEAIADYGLVGMAMNPSHSWVAPAGGRQPVFGTNPLAFAWPRPGGQPFVFDFATSAIARGDIELHARQGKPIPEHWAIDADGQPTTDAKAALQGAMQTFGGHKGSALAAMIELLAGALIGDLTSAESMAFDGGVGATPCHGELVLAFDPRVFLGEGYEQGLERAEGLFAAIARQGARLPSQRRFAARARSLEHGVQIPRGLLEDIRGLL.

S47 serves as the catalytic Charge relay system. Catalysis depends on H48, which acts as the Proton donor. R52 serves as a coordination point for substrate. 120–124 (HFSAL) lines the NADP(+) pocket. T160 serves as a coordination point for substrate. 178 to 180 (DFA) provides a ligand contact to NADP(+). Residue 186–187 (RG) coordinates substrate. Residue D188 is the Charge relay system of the active site. NADP(+)-binding positions include 229-230 (HK) and 304-310 (RLPSQRR).

This sequence belongs to the LDH2/MDH2 oxidoreductase family. In terms of assembly, homodimer.

It carries out the reaction L-proline + NAD(+) = 1-pyrroline-2-carboxylate + NADH + H(+). The catalysed reaction is L-proline + NADP(+) = 1-pyrroline-2-carboxylate + NADPH + H(+). Catalyzes the reduction of Delta(1)-pyrroline-2-carboxylate (Pyr2C) to L-proline, using NADPH as the electron donor. May be involved in a degradation pathway that converts trans-3-hydroxy-L-proline (t3LHyp) to L-proline. This is Delta(1)-pyrroline-2-carboxylate reductase from Pseudomonas fluorescens (strain ATCC BAA-477 / NRRL B-23932 / Pf-5).